Reading from the N-terminus, the 300-residue chain is Ribosomal protein L11 methyltransferase (300 aa).

S-adenosyl-L-methionine is bound by residues Thr-152, Gly-173, Asp-195, and Asn-234.

The protein belongs to the methyltransferase superfamily. PrmA family.

It is found in the cytoplasm. It catalyses the reaction L-lysyl-[protein] + 3 S-adenosyl-L-methionine = N(6),N(6),N(6)-trimethyl-L-lysyl-[protein] + 3 S-adenosyl-L-homocysteine + 3 H(+). Methylates ribosomal protein L11. The protein is Ribosomal protein L11 methyltransferase of Burkholderia orbicola (strain MC0-3).